A 187-amino-acid chain; its full sequence is MSKYLVVGLGNPGLEYEKTKHNVGFMCIDELLKEHTLFLNNSKFNGQFVKVDQPEDQIFIAKPMTYMNNSGEFVYEICKFYKIHEQNILVIYDDIDTDVGKIRVKAKGSSGGQNGIKSIISKMNTEKIKRIRIGIGKPVHNLTHHVLTKFSAEDSIKVQQAIIKAKDACNEFLNHVDFDKIMNKFNV.

Tyr16 contacts tRNA. Residue His21 is the Proton acceptor of the active site. TRNA-binding residues include Tyr66, Asn68, and Asn114.

This sequence belongs to the PTH family. In terms of assembly, monomer.

The protein localises to the cytoplasm. The enzyme catalyses an N-acyl-L-alpha-aminoacyl-tRNA + H2O = an N-acyl-L-amino acid + a tRNA + H(+). Its function is as follows. Hydrolyzes ribosome-free peptidyl-tRNAs (with 1 or more amino acids incorporated), which drop off the ribosome during protein synthesis, or as a result of ribosome stalling. In terms of biological role, catalyzes the release of premature peptidyl moieties from peptidyl-tRNA molecules trapped in stalled 50S ribosomal subunits, and thus maintains levels of free tRNAs and 50S ribosomes. In Malacoplasma penetrans (strain HF-2) (Mycoplasma penetrans), this protein is Peptidyl-tRNA hydrolase.